A 159-amino-acid polypeptide reads, in one-letter code: Large ribosomal subunit protein uL11 (159 aa).

This sequence belongs to the universal ribosomal protein uL11 family. As to quaternary structure, part of the ribosomal stalk of the 50S ribosomal subunit. Interacts with L10 and the large rRNA to form the base of the stalk. L10 forms an elongated spine to which L12 dimers bind in a sequential fashion forming a multimeric L10(L12)X complex.

Its function is as follows. Forms part of the ribosomal stalk which helps the ribosome interact with GTP-bound translation factors. The chain is Large ribosomal subunit protein uL11 from Methanothrix thermoacetophila (strain DSM 6194 / JCM 14653 / NBRC 101360 / PT) (Methanosaeta thermophila).